The following is a 403-amino-acid chain: MAKLIVSDLDLKGKKVLVRVDFNVPIKNGVIGDDNRIVAALPTIKYIIEHGGKAILLSHLGRVKSDADKKELSLRPVAERLSELLKKPVTFVPENEGKEVEETIDKMKDGDVIVLENTRFQDIDNDFGKRESKNDPKLGEYWASLGDVFVNDAFGTAHRSHASNVGIATAMKKAGKPAAAGFLLEKEIKFLGDAVENPVHPFVTILGGAKVSDKIGVIENLIPKSDHILIGGGMAYTFLAAQGHKIGKSLFEADKVELAKELLAKAGDKIVLPVDNVAATEFSNDAPHEVVGDDIPDNEMGLDIGPKTVEKFRDILKDAKTVVWNGPMGAFEMPNYAEGTLEVGRALADLKDAVTIIGGGDSTAAAKQLGIAPKISHISTGGGASLNYLEGKELPGIACVSDK.

Residues 21 to 23 (DFN), Arg36, 59 to 62 (HLGR), Arg119, and Arg159 each bind substrate. ATP-binding positions include Lys214, Gly301, Glu332, and 359-362 (GGDS).

The protein belongs to the phosphoglycerate kinase family. Monomer.

It is found in the cytoplasm. It catalyses the reaction (2R)-3-phosphoglycerate + ATP = (2R)-3-phospho-glyceroyl phosphate + ADP. Its pathway is carbohydrate degradation; glycolysis; pyruvate from D-glyceraldehyde 3-phosphate: step 2/5. This is Phosphoglycerate kinase from Lactobacillus gasseri (strain ATCC 33323 / DSM 20243 / BCRC 14619 / CIP 102991 / JCM 1131 / KCTC 3163 / NCIMB 11718 / NCTC 13722 / AM63).